The following is a 308-amino-acid chain: Putative transcription elongation factor S-II (308 aa).

The region spanning 5 to 84 (EETQSLCKQV…KDWKNVVDGK (80 aa)) is the TFIIS N-terminal domain. The tract at residues 82–126 (DGKSKSQDDGGAPPAKKHRKESVEEAKPEKKKIEAPYKRPEPSSR) is disordered. The span at 102-125 (ESVEEAKPEKKKIEAPYKRPEPSS) shows a compositional bias: basic and acidic residues. One can recognise a TFIIS central domain in the interval 148-263 (TRLKSAQLLL…EHQMSVQQGT (116 aa)). The segment at 266-306 (DMFKCGKCGKKNCTYTQLQTRSSDEPMTTFVFCLECGNRWK) adopts a TFIIS-type zinc-finger fold. Zn(2+)-binding residues include C270, C273, C298, and C301.

It belongs to the TFS-II family.

It is found in the nucleus. Its function is as follows. Necessary for efficient RNA polymerase II transcription elongation past template-encoded arresting sites. The arresting sites in DNA have the property of trapping a certain fraction of elongating RNA polymerases that pass through, resulting in locked ternary complexes. Cleavage of the nascent transcript by S-II allows the resumption of elongation from the new 3'-terminus. This is Putative transcription elongation factor S-II from Caenorhabditis elegans.